A 258-amino-acid polypeptide reads, in one-letter code: Myogenic factor 5 (258 aa).

Residues 21–50 are disordered; sequence LSSPEGEFPEDFEPRELPPFGAPAPTEPAC. The 52-residue stretch at 85 to 136 folds into the bHLH domain; sequence DRRKAATMRERRRLKKVNQAFETLKRCTTANPNQRLPKVEILRNAIRYIESL. The segment at 220–258 is disordered; it reads AEEPGLPLRHAGSLSPGASIDSGPGTPGSPPPRRTYQAL.

Efficient DNA binding requires dimerization with another bHLH protein.

The protein resides in the nucleus. Acts as a transcriptional activator that promotes transcription of muscle-specific target genes and plays a role in muscle differentiation. Induces fibroblasts to differentiate into myoblasts. Probable sequence specific DNA-binding protein. The chain is Myogenic factor 5 (MYF5) from Gallus gallus (Chicken).